The chain runs to 274 residues: uncharacterized protein (274 aa).

Belongs to the type II cytokine receptor family.

This is an uncharacterized protein from Sus scrofa (Pig).